The sequence spans 642 residues: Threonine--tRNA ligase (642 aa).

Positions 1–61 (MPVITLPDGS…ESDAQLAIIT (61 aa)) constitute a TGS domain. A catalytic region spans residues 243–534 (DHRKIGKQLD…LTEEYAGFFP (292 aa)). Zn(2+) is bound by residues cysteine 334, histidine 385, and histidine 511.

Belongs to the class-II aminoacyl-tRNA synthetase family. Homodimer. Zn(2+) serves as cofactor.

Its subcellular location is the cytoplasm. The catalysed reaction is tRNA(Thr) + L-threonine + ATP = L-threonyl-tRNA(Thr) + AMP + diphosphate + H(+). Functionally, catalyzes the attachment of threonine to tRNA(Thr) in a two-step reaction: L-threonine is first activated by ATP to form Thr-AMP and then transferred to the acceptor end of tRNA(Thr). Also edits incorrectly charged L-seryl-tRNA(Thr). This Yersinia enterocolitica serotype O:8 / biotype 1B (strain NCTC 13174 / 8081) protein is Threonine--tRNA ligase.